The chain runs to 68 residues: DNA gyrase inhibitor YacG (68 aa).

4 residues coordinate Zn(2+): Cys-12, Cys-15, Cys-30, and Cys-34. Residues 48 to 68 form a disordered region; sequence KLKTQDAPTSGKGQHSDDYED.

It belongs to the DNA gyrase inhibitor YacG family. Interacts with GyrB. Zn(2+) serves as cofactor.

Functionally, inhibits all the catalytic activities of DNA gyrase by preventing its interaction with DNA. Acts by binding directly to the C-terminal domain of GyrB, which probably disrupts DNA binding by the gyrase. In Acinetobacter baylyi (strain ATCC 33305 / BD413 / ADP1), this protein is DNA gyrase inhibitor YacG.